Here is a 199-residue protein sequence, read N- to C-terminus: V-type proton ATPase subunit E (199 aa).

It belongs to the V-ATPase E subunit family.

Produces ATP from ADP in the presence of a proton gradient across the membrane. This chain is V-type proton ATPase subunit E, found in Clostridium botulinum (strain 657 / Type Ba4).